The chain runs to 1052 residues: Protein argonaute 14 (1052 aa).

Residues Met-1–His-39 are compositionally biased toward gly residues. 2 disordered regions span residues Met-1–Val-127 and Gly-170–Ser-194. Over residues Pro-40–Gly-49 the composition is skewed to low complexity. 2 stretches are compositionally biased toward gly residues: residues Tyr-50–Gly-59 and Gly-66–Gly-81. Low complexity predominate over residues Val-97–Ala-117. Residues Pro-173–Ile-183 are compositionally biased toward pro residues. Residues Ser-394 to Glu-510 enclose the PAZ domain. Residues Leu-677–Glu-1009 enclose the Piwi domain.

This sequence belongs to the argonaute family. Ago subfamily. Expressed in seeds.

In terms of biological role, probably involved in the RNA silencing pathway. May bind to short RNAs such as microRNAs (miRNAs) or short interfering RNAs (siRNAs), and represses the translation of mRNAs which are complementary to them. The sequence is that of Protein argonaute 14 (AGO14) from Oryza sativa subsp. japonica (Rice).